Consider the following 1048-residue polypeptide: [F-actin]-monooxygenase MICAL1 (1048 aa).

The segment at 1 to 489 (MASPASTNPA…QDLYDMMDKE (489 aa)) is monooxygenase domain. FAD is bound by residues Cys-95, 114–116 (EKR), 121–123 (RHN), Phe-181, Tyr-293, and Asp-393. Thr-475 carries the phosphothreonine modification. Residues 488 to 502 (KEHAQRKSDEPDSRK) show a composition bias toward basic and acidic residues. A disordered region spans residues 488 to 508 (KEHAQRKSDEPDSRKTTTGSA). Residues 507-611 (SAGTEELLHW…YLSHFHSAFK (105 aa)) form the Calponin-homology (CH) domain. Ser-616 carries the post-translational modification Phosphoserine. The segment at 643–676 (TRAKVDEETPSTEEPPVSEPSMSPNTPELSEHQE) is disordered. Residues 654-666 (TEEPPVSEPSMSP) are compositionally biased toward low complexity. In terms of domain architecture, LIM zinc-binding spans 681–743 (ELCELCGKHL…LQHLPQEDQK (63 aa)). The Zn(2+) site is built by Cys-683, Cys-686, His-704, Cys-707, Cys-710, Cys-713, Cys-733, and His-736. Disordered stretches follow at residues 741–787 (DQKE…QPAR), 805–825 (IIPD…SDLA), and 839–873 (PVQA…PPLE). A compositionally biased stretch (polar residues) spans 747–765 (NNGSLESQELPTPGDSNMQ). The segment covering 772-787 (PVTRVSPVPSPSQPAR) has biased composition (low complexity). 2 positions are modified to phosphoserine: Ser-777 and Ser-781. 3 coiled-coil regions span residues 847-867 (EAIE…EEEE), 906-949 (EEEM…ESSS), and 974-1031 (EEAE…VNQR). A compositionally biased stretch (acidic residues) spans 852-868 (GDDEEEEEEEEEEEEEP). The region spanning 905–1048 (KEEEMKRFCK…EERRLREMPA (144 aa)) is the bMERB domain.

It belongs to the Mical family. As to quaternary structure, associates with the SH3 domain of NEDD9. Interacts with VIM and PLXNA3. Interacts with RAB1B, RAB8A, RAB10, RAB13 and RAB15 (in their GTP-bound forms); binding to RAB1B is of low affinity compared to other Rab proteins; at least in case of RAB8A and RAB10 can bind 2 molecules of the Rab proteins simultaneously. Interacts with STK38 and STK38L. Interacts with GRAF1/ARHGAP26, GRAF2/ARHGAP10, RAB8A, RAB8B and RAB10; may bind simultaneously to GRAFs and Rabs and connects GRAFs to Rabs. Does not interact with RAB1 and RAB11A. FAD serves as cofactor. As to expression, expressed in the postnatal and adult hippocampus; found in dentate gyrus, the polymorphic layer, cornu ammonis (CA) 1-3 and in mossy fibers of the striatum lucidum. In adult hippocampus strongly expressed in CA3 pyramidial neurons.

It is found in the cytoplasm. The protein resides in the cytoskeleton. It localises to the endosome membrane. The protein localises to the midbody. It carries out the reaction L-methionyl-[F-actin] + NADPH + O2 + H(+) = L-methionyl-(R)-S-oxide-[F-actin] + NADP(+) + H2O. It catalyses the reaction NADPH + O2 + H(+) = H2O2 + NADP(+). Its function is as follows. Monooxygenase that promotes depolymerization of F-actin by mediating oxidation of specific methionine residues on actin to form methionine-sulfoxide, resulting in actin filament disassembly and preventing repolymerization. In the absence of actin, it also functions as a NADPH oxidase producing H(2)O(2). Acts as a cytoskeletal regulator that connects NEDD9 to intermediate filaments. Also acts as a negative regulator of apoptosis via its interaction with STK38 and STK38L; acts by antagonizing STK38 and STK38L activation by MST1/STK4. Involved in regulation of lamina-specific connectivity in the nervous system such as the development of lamina-restricted hippocampal connections. Through redox regulation of the actin cytoskeleton controls the intracellular distribution of secretory vesicles containing L1/neurofascin/NgCAM family proteins in neurons, thereby regulating their cell surface levels. May act as Rab effector protein and play a role in vesicle trafficking. Promotes endosomal tubule extension by associating with RAB8 (RAB8A or RAB8B), RAB10 and GRAF (GRAF1/ARHGAP26 or GRAF2/ARHGAP10) on the endosomal membrane which may connect GRAFs to Rabs, thereby participating in neosynthesized Rab8-Rab10-Rab11-dependent protein export. The polypeptide is [F-actin]-monooxygenase MICAL1 (Mical1) (Mus musculus (Mouse)).